The chain runs to 428 residues: Serine--tRNA ligase (428 aa).

231–233 contacts L-serine; sequence TAE. 262-264 is an ATP binding site; sequence RSE. An L-serine-binding site is contributed by glutamate 285. 349-352 is a binding site for ATP; sequence EISS. Serine 385 lines the L-serine pocket.

This sequence belongs to the class-II aminoacyl-tRNA synthetase family. Type-1 seryl-tRNA synthetase subfamily. As to quaternary structure, homodimer. The tRNA molecule binds across the dimer.

It is found in the cytoplasm. It catalyses the reaction tRNA(Ser) + L-serine + ATP = L-seryl-tRNA(Ser) + AMP + diphosphate + H(+). The enzyme catalyses tRNA(Sec) + L-serine + ATP = L-seryl-tRNA(Sec) + AMP + diphosphate + H(+). Its pathway is aminoacyl-tRNA biosynthesis; selenocysteinyl-tRNA(Sec) biosynthesis; L-seryl-tRNA(Sec) from L-serine and tRNA(Sec): step 1/1. Catalyzes the attachment of serine to tRNA(Ser). Is also able to aminoacylate tRNA(Sec) with serine, to form the misacylated tRNA L-seryl-tRNA(Sec), which will be further converted into selenocysteinyl-tRNA(Sec). This Staphylococcus aureus (strain MRSA252) protein is Serine--tRNA ligase.